A 140-amino-acid polypeptide reads, in one-letter code: ATP synthase epsilon chain (140 aa).

The protein belongs to the ATPase epsilon chain family. As to quaternary structure, F-type ATPases have 2 components, CF(1) - the catalytic core - and CF(0) - the membrane proton channel. CF(1) has five subunits: alpha(3), beta(3), gamma(1), delta(1), epsilon(1). CF(0) has three main subunits: a, b and c.

The protein resides in the cell inner membrane. Its function is as follows. Produces ATP from ADP in the presence of a proton gradient across the membrane. The chain is ATP synthase epsilon chain from Xanthomonas oryzae pv. oryzae (strain PXO99A).